A 160-amino-acid polypeptide reads, in one-letter code: Large ribosomal subunit protein uL22c (160 aa).

This sequence belongs to the universal ribosomal protein uL22 family. In terms of assembly, part of the 50S ribosomal subunit.

Its subcellular location is the plastid. The protein localises to the chloroplast. Functionally, this protein binds specifically to 23S rRNA. The globular domain of the protein is located near the polypeptide exit tunnel on the outside of the subunit, while an extended beta-hairpin is found that lines the wall of the exit tunnel in the center of the 70S ribosome. This is Large ribosomal subunit protein uL22c (rpl22) from Capsella bursa-pastoris (Shepherd's purse).